Here is an 863-residue protein sequence, read N- to C-terminus: Importin subunit beta-1 (863 aa).

19 HEAT repeats span residues 2 to 31, 33 to 62, 85 to 124, 129 to 159, 170 to 201, 212 to 248, 253 to 299, 314 to 360, 364 to 392, 399 to 439, 449 to 481, 496 to 530, 536 to 586, 592 to 630, 635 to 671, 677 to 715, 720 to 767, 778 to 815, and 822 to 861; these read NAGE…AART, FAQY…LALK, VEIK…ELAT, DLMV…YICE, SNAI…LYDS, EYER…MHLY, PFYM…EIQE, FARA…QVVG, VNPV…AFGS, VAML…SSFV, LSPM…VCHF, YEAI…LITF, LPMI…IIRR, RTSS…MNSL, EVYV…LARA, LPYC…ALAI, QTYL…ITQA, QPYV…LAES, and KSYF…KRQA. Residues 21–101 form the Importin N-terminal domain; that stretch reads AEKQLENAAR…KSLALQTLGS (81 aa).

It belongs to the importin beta family. Importin beta-1 subfamily. In terms of assembly, forms a complex with an importin alpha subunit. Interacts with Ran; interacts specifically with the GTP-bound form of Ran (GTP-Ran), protecting it from GTP hydrolysis and nucleotide exchange. Interacts with nucleoporins.

The protein resides in the cytoplasm. Its subcellular location is the nucleus envelope. The protein localises to the nucleus. It is found in the nuclear pore complex. Functionally, importin beta subunit that functions in nuclear protein import through association with the importin alpha subunit, which binds to the clasical nuclear localization signal (cNLS) in cargo substrates. Docking of the importin/substrate complex to the nuclear pore complex (NPC) is mediated by importin beta through binding to nucleoporin FxFG repeats and the complex is subsequently translocated through the pore by an energy requiring, Ran-dependent mechanism. At the nucleoplasmic side of the NPC, GTP-Ran binds to importin beta and the three components separate, leading to release of the cargo. Importin alpha and beta are re-exported from the nucleus to the cytoplasm where GTP hydrolysis releases Ran from importin beta. The directionality of nuclear import is thought to be conferred by an asymmetric distribution of the GTP- and GDP-bound forms of Ran between the cytoplasm and nucleus. This is Importin subunit beta-1 from Schizosaccharomyces pombe (strain 972 / ATCC 24843) (Fission yeast).